We begin with the raw amino-acid sequence, 231 residues long: (S)-2-haloacid dehalogenase 4A (231 aa).

Catalysis depends on Asp11, which acts as the Nucleophile. An (S)-2-haloacid-binding positions include 12–13, Arg42, and 119–120; these read AY and SN. Positions 176 to 181 are important for catalytic activity; that stretch reads SSNAWD.

This sequence belongs to the HAD-like hydrolase superfamily. S-2-haloalkanoic acid dehalogenase family.

The catalysed reaction is an (S)-2-haloacid + H2O = a (2R)-2-hydroxycarboxylate + a halide anion + H(+). The enzyme catalyses (S)-2-chloropropanoate + H2O = (R)-lactate + chloride + H(+). Its function is as follows. Catalyzes the hydrolytic dehalogenation of small (S)-2-haloalkanoic acids to yield the corresponding (R)-2-hydroxyalkanoic acids. Acts on acids of short chain lengths, C(2) to C(4), with inversion of configuration at C-3. Active with 2-halogenated carboxylic acids and converts only the S-isomer (or L-isomer) of 2-chloropropionic acid with inversion of configuration to produce R-lactate (or D-isomer). This Burkholderia cepacia (Pseudomonas cepacia) protein is (S)-2-haloacid dehalogenase 4A.